A 354-amino-acid chain; its full sequence is D-alanine--D-alanine ligase (354 aa).

Residues 154–348 (RSWFLTNNIN…FTNLIEEIIK (195 aa)) form the ATP-grasp domain. Position 181 to 232 (181 to 232 (MKRPYVIKPITQGSSIGIEVIFEEDDFNFANYDFPYGDQVIIEKYIKGRELQ)) interacts with ATP. 3 residues coordinate Mg(2+): E301, E315, and N317.

It belongs to the D-alanine--D-alanine ligase family. Mg(2+) serves as cofactor. The cofactor is Mn(2+).

It localises to the cytoplasm. The enzyme catalyses 2 D-alanine + ATP = D-alanyl-D-alanine + ADP + phosphate + H(+). The protein operates within cell wall biogenesis; peptidoglycan biosynthesis. In terms of biological role, cell wall formation. In Rickettsia canadensis (strain McKiel), this protein is D-alanine--D-alanine ligase.